The primary structure comprises 665 residues: MDKKKFKEEIEKLREEIEYHNYRYYVLADPVISDEEYDKLLKKLIELEKKYPEFYSPTSPTQKVGGKVLDGFKKVMHSIPMLSLDNTYNEEEIKEFDERIKKLLGVNEVEYVCELKIDGISVALRYENGQFVTALSRGDGIEGEDISENVKKIKSIPLRLFKNLTIEVRGEIFMPVKEFEKYNKIAEEEGLQPFANPRNATAGTIRQLDSSIVAKRNLDSFIYYVVNPEIYGLKTQWEALKFLKEIGFKTNPYSRLCHDVNCVIDFWKEMTKKRTQLDYWIDGLVIKVNNFEYQRKLGETAKAPRWAIAFKFPSIKAESKILNIELNVGRTGVITPVAVLEPINLEGSIVKRASLHNFDYIKEKDIRIGDHVYVEKAGGIIPQIVSVIKEKRTGKELEIEIPKSCPICGGKVGKISEEEVAIRCLNPHCPQKLKRHMEIFVSKSAFNISGLGEKIVEKIVDARLINDVADIFYLTPFDLAQISGLGQKSIANILEQIEKAKNTPLYRVIIGLGIPLVGEKTAKILADKFKSIKALSQASYDELTSIEGIGPEVAKNIIEYFKNEKTKEIIRKLENAGVKLEQEEDTKKSSKLAGLTFVITGKFNSFTREEVKEIIEKLGGKVTNTVSSKTDYLLVGEKPGSKYQKALELGVKIINEDEFKKMIID.

NAD(+)-binding positions include 34 to 38, 83 to 84, and E114; these read DEEYD and SL. K116 serves as the catalytic N6-AMP-lysine intermediate. NAD(+) contacts are provided by R137, E171, K287, and K311. Positions 405, 408, 424, and 429 each coordinate Zn(2+). The BRCT domain maps to 587 to 665; that stretch reads KKSSKLAGLT…EDEFKKMIID (79 aa).

The protein belongs to the NAD-dependent DNA ligase family. LigA subfamily. Requires Mg(2+) as cofactor. The cofactor is Mn(2+).

The enzyme catalyses NAD(+) + (deoxyribonucleotide)n-3'-hydroxyl + 5'-phospho-(deoxyribonucleotide)m = (deoxyribonucleotide)n+m + AMP + beta-nicotinamide D-nucleotide.. Its function is as follows. DNA ligase that catalyzes the formation of phosphodiester linkages between 5'-phosphoryl and 3'-hydroxyl groups in double-stranded DNA using NAD as a coenzyme and as the energy source for the reaction. It is essential for DNA replication and repair of damaged DNA. The chain is DNA ligase from Thermosipho africanus (strain TCF52B).